The sequence spans 328 residues: Carbonic anhydrase-related protein 10 (328 aa).

The Alpha-carbonic anhydrase domain occupies 31 to 301; it reads GWWAYKEVVQ…LNNRCIRTNI (271 aa).

This sequence belongs to the alpha-carbonic anhydrase family.

In terms of biological role, does not have a catalytic activity. This Macaca fascicularis (Crab-eating macaque) protein is Carbonic anhydrase-related protein 10 (CA10).